The chain runs to 252 residues: 5'-nucleotidase SurE (252 aa).

Residues Asp-8, Asp-9, Ser-39, and Asn-95 each coordinate a divalent metal cation.

The protein belongs to the SurE nucleotidase family. The cofactor is a divalent metal cation.

It localises to the cytoplasm. It carries out the reaction a ribonucleoside 5'-phosphate + H2O = a ribonucleoside + phosphate. In terms of biological role, nucleotidase that shows phosphatase activity on nucleoside 5'-monophosphates. In Clostridium botulinum (strain Kyoto / Type A2), this protein is 5'-nucleotidase SurE.